Here is a 262-residue protein sequence, read N- to C-terminus: Putative dimethyl sulfoxide reductase iron-sulfur subunit B (262 aa).

3 consecutive 4Fe-4S ferredoxin-type domains span residues 4–34 (YGLVIDQERCIGCQSCSLTCKQENNVPMGQF), 62–93 (LEMTYQPTACQHCENAPCVKVCPVNATYTRDD), and 94–123 (GIVEIDYDKCMGCRYCMAACPYNARVFNWD). Positions 13, 16, 19, 23, 71, 74, 79, 83, 103, 106, 109, 113, 147, 150, 162, and 166 each coordinate [4Fe-4S] cluster. Residues 209–262 (NGEMSPGRPWKSKKLESELDDDEAAKAARRRSGSVENGYDVTPHVPAETAGGDD) form a disordered region.

Probable multiprotein complex that likely consists of DmsA, DmsB and DmsC. [4Fe-4S] cluster is required as a cofactor.

The protein resides in the cell membrane. Dimethyl sulfoxide (DMSO) reductase catalyzes the reduction of dimethyl sulfoxide (DMSO) to dimethyl sulfide (DMS) during anaerobic respiration; it can also use trimethylamine N-oxide (TMAO) as terminal electron acceptor. Subunit B is proposed to be involved in electron transfer. This chain is Putative dimethyl sulfoxide reductase iron-sulfur subunit B (dmsB), found in Halobacterium salinarum (strain ATCC 700922 / JCM 11081 / NRC-1) (Halobacterium halobium).